Consider the following 513-residue polypeptide: uncharacterized protein (513 aa).

The CYTH domain maps to 11 to 219 (HLEVERKFDV…SKLARVLGAT (209 aa)). One can recognise a CHAD domain in the interval 228 to 506 (PQPPADPVHR…LEAALRKLDK (279 aa)).

This is an uncharacterized protein from Mycobacterium tuberculosis (strain CDC 1551 / Oshkosh).